The chain runs to 711 residues: Taperin (711 aa).

3 disordered regions span residues 134–305, 328–384, and 414–438; these read SRLL…APKP, RNSF…LGKS, and QRPSSPPPFLPAASEEAEPAEGLRV. Over residues 157-180 the composition is skewed to pro residues; sequence PPPPPPPPAPPRPPPAAPSPPAAP. Positions 197-206 are enriched in polar residues; that stretch reads LQKTGSNSFT. Ser-241 bears the Phosphoserine mark. Residues 267-282 show a composition bias toward low complexity; that stretch reads TPSATPASPPASATPS. The span at 283 to 296 shows a compositional bias: polar residues; it reads QRQCVSAATSTNDS. Residues Ser-362, Ser-418, and Ser-463 each carry the phosphoserine modification. 4 disordered regions span residues 500 to 535, 572 to 630, 642 to 662, and 674 to 711; these read TFTVVPKRKPGTLQDQHFSQANREPRPREAEEEEAS, SRKK…EKPF, SVRPESSRLPEGSSGLSSYTP, and QALEQAPREAEPPPVEAMLTPASQNDLSDFRSEPALYF. 2 stretches are compositionally biased toward polar residues: residues 512–521 and 581–590; these read LQDQHFSQAN and NDKSLQTTFE. A compositionally biased stretch (acidic residues) spans 597-624; the sequence is LEQEEEVDQQEEEEEEEEEEEEEEEGSG.

It belongs to the taperin family. In terms of assembly, interacts with GRXCR2; the interaction restricts TPRN to the stereocilum basal region. Interacts with actin ACTB; the interaction may stabilize stereocilia. Interacts with CLIC5. Interacts with PTPRQ. TPRN, CLIC5 and PTPQR form concentric rings at the base of stereocilia and may form a complex. Interacts with phosphatase PPP1CA; the interaction results in inhibition of PPC1A phosphatase activity. Interacts with DNA damage response proteins XRCC6/KU70, XRCC5/KU80, PARP1, TOP1 and TOP2A; these interactions recruit TPRN to sites of DNA damage where it may play a role in DNA repair. Expression is detected in fetal cochlea.

The protein localises to the cell projection. The protein resides in the stereocilium. It is found in the microvillus. Its subcellular location is the nucleus. It localises to the nucleoplasm. The protein localises to the cytoplasm. In terms of biological role, essential for hearing. Required for maintenance of stereocilia on both inner and outer hair cells. Necessary for the integrity of the stereociliary rootlet. May act as an actin cytoskeleton regulator involved in the regulation of actin dynamics at the pointed end in hair cells. Forms rings at the base of stereocilia and binds actin filaments in the stereocilia which may stabilize the stereocilia. Acts as a strong inhibitor of PPP1CA phosphatase activity. Recruited to sites of DNA damage and may play a role in DNA damage repair. This Homo sapiens (Human) protein is Taperin (TPRN).